The chain runs to 58 residues: Cyclotide trypsin inhibitor TopI1 (58 aa).

The signal sequence occupies residues 1–23 (MKFIIVLLLLTALTLTSIPVIEG). Positions 24–55 (ILKRCKTYDDCKDVCKARKGKCEFGICKCMIK) form a cross-link, cyclopeptide (Ile-Lys). 3 cysteine pairs are disulfide-bonded: Cys28-Cys45, Cys34-Cys50, and Cys38-Cys52. Position 56 is a serine amide (Ser56).

This is a cyclic peptide. In terms of tissue distribution, expressed by the venom gland.

It localises to the secreted. In terms of biological role, first cyclic scorpion trypsin inhibitor (Kd~0.5 nM). Does not inhibit chymotrypsin. The polypeptide is Cyclotide trypsin inhibitor TopI1 (Tityus obscurus (Amazonian scorpion)).